The sequence spans 241 residues: Viral CASP8 and FADD-like apoptosis regulator (241 aa).

2 DED domains span residues 8–78 and 95–175; these read PSLP…SRFG and RYRK…QLVE. The segment at 212-241 is disordered; sequence CMPVQESSDSPELLRTPVQESSSDSPEQTT. Residues 229-241 show a composition bias toward polar residues; it reads VQESSSDSPEQTT.

In terms of assembly, associates with the death-inducing signaling complex (DISC) formed by TNFRSF6/FAS, FADD and CASP8. Interacts with FADD. Interacts with host TRAF2. Interacts with host NEMO/IKBKG (via N-terminus). Interacts with host SH3BP4; this interaction plays an important in the suppression of host autophagy.

The protein resides in the host cytoplasm. It is found in the host nucleus. Inhibits TNFRSF1A, TNFRSF6/FAS and TNFRSF12 induced apoptosis. Directs the degradation of host NFKBIB but not NFKBIA. Also suppresses host NF-kappa-B activation by interacting with and preventing ubiquitination of host NEMO/IKBKG, the NF-kappa-B essential modulator subunit of the IKK complex. Interferes with host CASP8/caspase-8 recruitment and activation at the death-inducing signaling complex (DISC). May lead to higher virus production and contribute to virus persistence and oncogenicity. Also participates in the inhibition of host autophagy by interacting with host SH3BP4. The polypeptide is Viral CASP8 and FADD-like apoptosis regulator (Homo sapiens (Human)).